Consider the following 229-residue polypeptide: MSQPRPLLSPPETEEQLLAQAQQLSGYTLGELAALAGLVTPENLKRDKGWIGVLLEIWLGASAGSKPEQDFAGLGVELKTIPVDSLGRPLETTFVCVAPLTGNSGVTWETSHVRHKLKRVLWIPVEGERSIPLAQRRVGSPLLWSPNEEEDRQLREDWEELMDMIVLGQVERITARHGEYLQIRPKAANAKALTEAIGARGERILTLPRGFYLKKNFTSALLARHFLIQ.

It belongs to the MutH family.

The protein resides in the cytoplasm. In terms of biological role, sequence-specific endonuclease that cleaves unmethylated GATC sequences. It is involved in DNA mismatch repair. In Escherichia coli O17:K52:H18 (strain UMN026 / ExPEC), this protein is DNA mismatch repair protein MutH.